The primary structure comprises 503 residues: Maturase K (503 aa).

It belongs to the intron maturase 2 family. MatK subfamily.

The protein localises to the plastid. The protein resides in the chloroplast. In terms of biological role, usually encoded in the trnK tRNA gene intron. Probably assists in splicing its own and other chloroplast group II introns. This Kunzea baxteri (Scarlet kunzea) protein is Maturase K.